Reading from the N-terminus, the 846-residue chain is Cap-specific mRNA (nucleoside-2'-O-)-methyltransferase 1 (846 aa).

The segment at 1 to 81 is disordered; sequence MKRKSDSEQQ…LPDTLAEGSS (81 aa). The Bipartite nuclear localization signal signature appears at 2-20; sequence KRKSDSEQQPSVQCRKKKR. Residues 27 to 45 show a composition bias toward polar residues; sequence NLSSTSDDDTQYSNHGTQE. Positions 87–133 constitute a G-patch domain; the sequence is YNSVSQKLMAKMGFREGEGLGKFGQGRKEIVETSKQKGRRGLGMVLK. Residues 203–207 and Arg-218 each bind substrate; that span reads KSAFD. One can recognise a RrmJ-type SAM-dependent 2'-O-MTase domain in the interval 231–450; it reads FFLNRAAMKM…ERYVVCRGLK (220 aa). Position 234 (Asn-234) interacts with S-adenosyl-L-methionine. Lys-239 is a catalytic residue. Residues 277-283 and 335-336 each bind S-adenosyl-L-methionine; these read CAGPGGF and DV. Residue Asp-364 is part of the active site. Position 374 to 376 (374 to 376) interacts with substrate; the sequence is NIQ. Lys-404 (proton acceptor) is an active-site residue. Position 439 (Asn-439) interacts with substrate. One can recognise a WW domain in the interval 752–786; that stretch reads KTINEPWSMAYSKSQKRKYFYNSKTKNSQFELPVE.

It is found in the nucleus. It carries out the reaction a 5'-end (N(7)-methyl 5'-triphosphoguanosine)-ribonucleoside in mRNA + S-adenosyl-L-methionine = a 5'-end (N(7)-methyl 5'-triphosphoguanosine)-(2'-O-methyl-ribonucleoside) in mRNA + S-adenosyl-L-homocysteine + H(+). S-adenosyl-L-methionine-dependent methyltransferase that mediates mRNA cap1 2'-O-ribose methylation to the 5'-cap structure of mRNAs. Methylates the ribose of the first nucleotide of a m(7)GpppG-capped mRNA and small nuclear RNA (snRNA) to produce m(7)GpppRm (cap1). Displays a preference for cap0 transcripts. Cap1 modification is linked to higher levels of translation. May be involved in the interferon response pathway. This is Cap-specific mRNA (nucleoside-2'-O-)-methyltransferase 1 (cmtr1) from Xenopus laevis (African clawed frog).